We begin with the raw amino-acid sequence, 286 residues long: Elongation factor Ts (286 aa).

An involved in Mg(2+) ion dislocation from EF-Tu region spans residues 82 to 85 (TDFV).

This sequence belongs to the EF-Ts family.

It is found in the cytoplasm. In terms of biological role, associates with the EF-Tu.GDP complex and induces the exchange of GDP to GTP. It remains bound to the aminoacyl-tRNA.EF-Tu.GTP complex up to the GTP hydrolysis stage on the ribosome. In Hamiltonella defensa subsp. Acyrthosiphon pisum (strain 5AT), this protein is Elongation factor Ts.